The chain runs to 333 residues: MPSMPEEPILTPTPDRFCMFPIQYPQIWEMYKKAEASFWTAEEVDLSQDNRDWENSLTNDERHFIKHVLAFFAASDGIVLENLSTRFMSDVQISEARAFYGFQIAIENIHSEMYSLLLDTYIKDNKERDHLFRAIETIPCVTKKAEWAMKWINGSQSFAERIVAFACVEGIFFSGSFCSIFWLKKRGLMPGLTFSNELISRDEGLHCDFACLIYSLLRTKLDEDRLKAIVCDAVEIEREFVCDALPCALVGMNRELMSQYIEFVADRLLAALGCAKVYGVSNPFDWMELISLQGKTNFFEKRVGEYQKASIMSSVHGNAAFNDDHVFKLDEDF.

3 residues coordinate Fe cation: Asp-76, Glu-107, and His-110. The active site involves Tyr-114. Glu-169, Glu-203, and His-206 together coordinate Fe cation.

The protein belongs to the ribonucleoside diphosphate reductase small chain family. In terms of assembly, heterodimer of a large and a small chain. It depends on Fe cation as a cofactor. In terms of tissue distribution, expressed in roots, rosette leaves, stems and flowers.

It localises to the cytoplasm. The catalysed reaction is a 2'-deoxyribonucleoside 5'-diphosphate + [thioredoxin]-disulfide + H2O = a ribonucleoside 5'-diphosphate + [thioredoxin]-dithiol. In terms of biological role, provides the precursors necessary for DNA synthesis. Catalyzes the biosynthesis of deoxyribonucleotides from the corresponding ribonucleotides. In Arabidopsis thaliana (Mouse-ear cress), this protein is Ribonucleoside-diphosphate reductase small chain B (RNR2B).